A 156-amino-acid polypeptide reads, in one-letter code: Envelope glycoprotein L (156 aa).

An N-terminal signal peptide occupies residues 1–16 (MSPLVAVLVFFSAALG). Residues 50-156 (ELEWDDEDHP…LRYNGGPPAE (107 aa)) enclose the gL alphaherpesvirus-type domain. A disulfide bond links cysteine 71 and cysteine 95.

Belongs to the herpesviridae glycoprotein L (gL) family. Alphaherpesvirinae gL subfamily. As to quaternary structure, interacts with glycoprotein H (gH); this interaction is necessary for the correct processing and cell surface expression of gH. The heterodimer gH/gL seems to interact with gB trimers during fusion. In terms of processing, O-glycosylated, and sialylated.

Its subcellular location is the virion membrane. The protein resides in the host cell membrane. The protein localises to the host Golgi apparatus. It localises to the host trans-Golgi network. The heterodimer glycoprotein H-glycoprotein L is required for the fusion of viral and plasma membranes leading to virus entry into the host cell. Acts as a functional inhibitor of gH and maintains gH in an inhibited form. Upon binding to host integrins, gL dissociates from gH leading to activation of the viral fusion glycoproteins gB and gH. This Suid herpesvirus 1 (strain Indiana-Funkhauser / Becker) (SuHV-1) protein is Envelope glycoprotein L.